A 712-amino-acid chain; its full sequence is Polyribonucleotide nucleotidyltransferase (712 aa).

Mg(2+) contacts are provided by D487 and D493. The KH domain maps to 554–613 (PKIITMTINPDKIRDVIGPSGKQINKIIEETGVKIDIEQDGTVFISSINQEMNDKAKKII). One can recognise an S1 motif domain in the interval 623–691 (GEIYEGKVKR…KQGRVNLSRK (69 aa)).

The protein belongs to the polyribonucleotide nucleotidyltransferase family. Mg(2+) serves as cofactor.

It localises to the cytoplasm. It catalyses the reaction RNA(n+1) + phosphate = RNA(n) + a ribonucleoside 5'-diphosphate. Functionally, involved in mRNA degradation. Catalyzes the phosphorolysis of single-stranded polyribonucleotides processively in the 3'- to 5'-direction. This Bacillus anthracis protein is Polyribonucleotide nucleotidyltransferase.